The following is a 686-amino-acid chain: tRNA (guanine(37)-N(1))-methyltransferase (686 aa).

A disordered region spans residues 206–244 (GGPSSVSLTEDTDGSEQPQGLPRAAAAPPPPSNKRRASY). Residues histidine 428, 466 to 467 (DL), 495 to 496 (DG), and asparagine 530 contribute to the S-adenosyl-L-methionine site.

The protein belongs to the class I-like SAM-binding methyltransferase superfamily. TRM5/TYW2 family. In terms of assembly, monomer.

It localises to the mitochondrion matrix. Its subcellular location is the nucleus. The protein resides in the cytoplasm. It catalyses the reaction guanosine(37) in tRNA + S-adenosyl-L-methionine = N(1)-methylguanosine(37) in tRNA + S-adenosyl-L-homocysteine + H(+). Its function is as follows. Specifically methylates the N1 position of guanosine-37 in various cytoplasmic and mitochondrial tRNAs. Methylation is not dependent on the nature of the nucleoside 5' of the target nucleoside. This is the first step in the biosynthesis of wybutosine (yW), a modified base adjacent to the anticodon of tRNAs and required for accurate decoding. The protein is tRNA (guanine(37)-N(1))-methyltransferase of Leishmania major.